Consider the following 278-residue polypeptide: AXRPKPIWDVAHMVNDLELVDEYLGDGANGLELDVAFSDDGTAEKMYHGVPCDCFRSCKRTETFTKYMDYIRELTTPGNSKFNNNLILLIMDLKLNGIEPNVAYAAGKSVAEKLLSSYWQNGESGARAYIVLSLETITRPEFINGFRDAIKASGHEELFEKIGWDFSGNEDLGDIRRVYQKYGIDEHIWQGDGITNCLPRGDYRLTEAMKKKNDPDYKYTEKVYTWSIDKEASIRNALRLGVDAVMTNYPARVKSILNESEFSSTHRMATYEDNPWQK.

Residue His12 is part of the active site. 2 residues coordinate Mg(2+): Glu32 and Asp34. The active-site Nucleophile is His48. 2 disulfides stabilise this stretch: Cys52/Cys58 and Cys54/Cys197. Asp92 serves as a coordination point for Mg(2+). The N-linked (GlcNAc...) asparagine glycan is linked to Asn258.

This sequence belongs to the arthropod phospholipase D family. Class II subfamily. Class IIb sub-subfamily. Expressed by the venom gland.

It is found in the secreted. It carries out the reaction an N-(acyl)-sphingosylphosphoethanolamine = an N-(acyl)-sphingosyl-1,3-cyclic phosphate + ethanolamine. The enzyme catalyses a 1-acyl-sn-glycero-3-phosphocholine = a 1-acyl-sn-glycero-2,3-cyclic phosphate + choline. The catalysed reaction is a 1-acyl-sn-glycero-3-phosphoethanolamine = a 1-acyl-sn-glycero-2,3-cyclic phosphate + ethanolamine. This toxin does not show activity on sphingomyelin (SM) and does not show dermonecrotic activities. This toxin is a member of dermonecrotic toxins that cleave the phosphodiester linkage between the phosphate and headgroup of certain phospholipids (sphingolipid and lysolipid substrates), forming an alcohol (often choline) and a cyclic phosphate. It may act on ceramide phosphoethanolamine (CPE), lysophosphatidylcholine (LPC) and lysophosphatidylethanolamine (LPE), but not on lysophosphatidylserine (LPS), and lysophosphatidylglycerol (LPG). It may act by transphosphatidylation, releasing exclusively cyclic phosphate products as second products. This is Dermonecrotic toxin LbSicTox-betaIA1a from Loxosceles boneti (North American fiddleback spider).